The following is a 33-amino-acid chain: LADDMPATMADQEVYRPEPEQIDSRNKYFSPRL.

The segment at 1–33 (LADDMPATMADQEVYRPEPEQIDSRNKYFSPRL) is disordered. Residues 13–26 (EVYRPEPEQIDSRN) show a composition bias toward basic and acidic residues. Position 33 is a leucine amide (leucine 33).

The protein belongs to the pyrokinin family.

The protein localises to the secreted. Involved in the control of pheromone production in females. This chain is Pheromone biosynthesis-activating neuropeptide, found in Lymantria dispar (Gypsy moth).